Consider the following 208-residue polypeptide: High frequency lysogenization protein HflD homolog (208 aa).

It belongs to the HflD family.

Its subcellular location is the cytoplasm. It is found in the cell inner membrane. The chain is High frequency lysogenization protein HflD homolog from Edwardsiella ictaluri (strain 93-146).